A 259-amino-acid polypeptide reads, in one-letter code: Ribosomal RNA small subunit methyltransferase J (259 aa).

S-adenosyl-L-methionine is bound by residues 101–102 (RD), 117–118 (ER), 153–154 (SS), and D176.

This sequence belongs to the methyltransferase superfamily. RsmJ family.

It is found in the cytoplasm. It catalyses the reaction guanosine(1516) in 16S rRNA + S-adenosyl-L-methionine = N(2)-methylguanosine(1516) in 16S rRNA + S-adenosyl-L-homocysteine + H(+). In terms of biological role, specifically methylates the guanosine in position 1516 of 16S rRNA. The sequence is that of Ribosomal RNA small subunit methyltransferase J from Aliivibrio fischeri (strain MJ11) (Vibrio fischeri).